The chain runs to 283 residues: Cardiolipin synthase (CMP-forming) (283 aa).

A run of 3 helical transmembrane segments spans residues 83 to 103, 155 to 175, and 209 to 229; these read PFIGLFIITNNLTPALGLFAF, VSIAAIILGRDVLLAISALFI, and LSKWNTFFQMVYLGSGVLLLL.

The protein belongs to the CDP-alcohol phosphatidyltransferase class-I family. May be found in a large complex. The cofactor is Mg(2+).

The protein localises to the mitochondrion inner membrane. The catalysed reaction is a CDP-1,2-diacyl-sn-glycerol + a 1,2-diacyl-sn-glycero-3-phospho-(1'-sn-glycerol) = a cardiolipin + CMP + H(+). Functionally, catalyzes the synthesis of cardiolipin (CL) (diphosphatidylglycerol) by specifically transferring a phosphatidyl group from CDP-diacylglycerol to phosphatidylglycerol (PG). CL is a key phospholipid in mitochondrial membranes and plays important roles in maintaining the functional integrity and dynamics of mitochondria under both optimal and stress conditions. The polypeptide is Cardiolipin synthase (CMP-forming) (CRD1) (Saccharomyces cerevisiae (strain ATCC 204508 / S288c) (Baker's yeast)).